The primary structure comprises 575 residues: Dihydroxy-acid dehydratase (575 aa).

The segment at 1–27 (MSNQERQERPEKDPDLRSTEVTEGYEK) is disordered. [2Fe-2S] cluster is bound at residue cysteine 61. Position 93 (aspartate 93) interacts with Mg(2+). [2Fe-2S] cluster is bound at residue cysteine 134. The Mg(2+) site is built by aspartate 135 and lysine 136. Residue lysine 136 is modified to N6-carboxylysine. Cysteine 206 lines the [2Fe-2S] cluster pocket. Residue glutamate 460 participates in Mg(2+) binding. The active-site Proton acceptor is the serine 486.

This sequence belongs to the IlvD/Edd family. Homodimer. The cofactor is [2Fe-2S] cluster. Requires Mg(2+) as cofactor.

The catalysed reaction is (2R)-2,3-dihydroxy-3-methylbutanoate = 3-methyl-2-oxobutanoate + H2O. It carries out the reaction (2R,3R)-2,3-dihydroxy-3-methylpentanoate = (S)-3-methyl-2-oxopentanoate + H2O. Its pathway is amino-acid biosynthesis; L-isoleucine biosynthesis; L-isoleucine from 2-oxobutanoate: step 3/4. It participates in amino-acid biosynthesis; L-valine biosynthesis; L-valine from pyruvate: step 3/4. Its function is as follows. Functions in the biosynthesis of branched-chain amino acids. Catalyzes the dehydration of (2R,3R)-2,3-dihydroxy-3-methylpentanoate (2,3-dihydroxy-3-methylvalerate) into 2-oxo-3-methylpentanoate (2-oxo-3-methylvalerate) and of (2R)-2,3-dihydroxy-3-methylbutanoate (2,3-dihydroxyisovalerate) into 2-oxo-3-methylbutanoate (2-oxoisovalerate), the penultimate precursor to L-isoleucine and L-valine, respectively. The sequence is that of Dihydroxy-acid dehydratase from Haloarcula marismortui (strain ATCC 43049 / DSM 3752 / JCM 8966 / VKM B-1809) (Halobacterium marismortui).